The sequence spans 184 residues: Muscle-specific protein 20 (184 aa).

Positions 17–122 constitute a Calponin-homology (CH) domain; that stretch reads PEMDKEAQEW…NTIFALGRAT (106 aa). The stretch at 157-181 is one Calponin-like repeat; it reads VGLQAGSNKGATQAGQNLGAGRKIL.

The protein belongs to the calponin family. In terms of tissue distribution, found in synchronous muscle; not found in asynchronous indirect flight muscle.

The protein is Muscle-specific protein 20 (Mp20) of Drosophila melanogaster (Fruit fly).